We begin with the raw amino-acid sequence, 100 residues long: Large ribosomal subunit protein uL23 (100 aa).

The protein belongs to the universal ribosomal protein uL23 family. Part of the 50S ribosomal subunit. Contacts protein L29, and trigger factor when it is bound to the ribosome.

In terms of biological role, one of the early assembly proteins it binds 23S rRNA. One of the proteins that surrounds the polypeptide exit tunnel on the outside of the ribosome. Forms the main docking site for trigger factor binding to the ribosome. The protein is Large ribosomal subunit protein uL23 of Buchnera aphidicola subsp. Baizongia pistaciae (strain Bp).